A 920-amino-acid polypeptide reads, in one-letter code: Translation initiation factor IF-2 (920 aa).

The tract at residues 33 to 305 (KSASSTVEAP…RGRKSKRAKR (273 aa)) is disordered. Positions 53–86 (SKSAPAPAKSAGNGATAAPATSATPATAAAAAAP) are enriched in low complexity. Pro residues-rich tracts occupy residues 87-159 (APAP…PAPR), 179-193 (PRPQPRPGAPRPGTP), and 201-212 (NMPPRPAGPRPG). Residues 225–291 (PGGRGPGGGG…GAAGAFGRPG (67 aa)) are compositionally biased toward gly residues. Basic residues predominate over residues 295 to 304 (KRGRKSKRAK). Residues 416–588 (IRPPVVTVMG…VLLTADASLD (173 aa)) form the tr-type G domain. The G1 stretch occupies residues 425 to 432 (GHVDHGKT). A GTP-binding site is contributed by 425–432 (GHVDHGKT). The G2 stretch occupies residues 450 to 454 (GITQH). Residues 475–478 (DTPG) form a G3 region. Residues 475-479 (DTPGH) and 529-532 (NKID) each bind GTP. The interval 529–532 (NKID) is G4. The segment at 565–567 (SAK) is G5.

This sequence belongs to the TRAFAC class translation factor GTPase superfamily. Classic translation factor GTPase family. IF-2 subfamily.

The protein resides in the cytoplasm. In terms of biological role, one of the essential components for the initiation of protein synthesis. Protects formylmethionyl-tRNA from spontaneous hydrolysis and promotes its binding to the 30S ribosomal subunits. Also involved in the hydrolysis of GTP during the formation of the 70S ribosomal complex. This chain is Translation initiation factor IF-2, found in Mycobacterium sp. (strain JLS).